Here is an 82-residue protein sequence, read N- to C-terminus: uncharacterized protein (82 aa).

Basic and acidic residues predominate over residues methionine 1–serine 11. Residues methionine 1–arginine 25 are disordered. The segment covering serine 16–arginine 25 has biased composition (polar residues).

This is an uncharacterized protein from Human cytomegalovirus (strain AD169) (HHV-5).